The sequence spans 317 residues: Transaldolase (317 aa).

The active-site Schiff-base intermediate with substrate is the Lys-132.

This sequence belongs to the transaldolase family. Type 1 subfamily. Homodimer.

The protein resides in the cytoplasm. It catalyses the reaction D-sedoheptulose 7-phosphate + D-glyceraldehyde 3-phosphate = D-erythrose 4-phosphate + beta-D-fructose 6-phosphate. Its pathway is carbohydrate degradation; pentose phosphate pathway; D-glyceraldehyde 3-phosphate and beta-D-fructose 6-phosphate from D-ribose 5-phosphate and D-xylulose 5-phosphate (non-oxidative stage): step 2/3. Its function is as follows. Transaldolase is important for the balance of metabolites in the pentose-phosphate pathway. The protein is Transaldolase of Mannheimia succiniciproducens (strain KCTC 0769BP / MBEL55E).